A 142-amino-acid chain; its full sequence is Transcriptional regulator MraZ (142 aa).

SpoVT-AbrB domains are found at residues 5-47 (EYPY…PLAS) and 76-119 (ANKA…NPER).

This sequence belongs to the MraZ family. Forms oligomers.

It localises to the cytoplasm. The protein localises to the nucleoid. The chain is Transcriptional regulator MraZ from Deinococcus geothermalis (strain DSM 11300 / CIP 105573 / AG-3a).